A 426-amino-acid chain; its full sequence is MNNLKNLRGTVDLFPDQLIKWQNVERILLEQLSRASIKEIRTPILEMTELFIRGIGEGTDVVSKEMYTFLDRGERSCTLRPEGTASVARALIQNGISSNPLQKLWYMGPMFRYERPQAGRQRQFHQLGVEFIGHDSVRSDVEIIALAWDILSKLGIKELNLEINTLGDTNDRSNFQKSFLKWLQANKDSLDLDSQNRISKNPLRILDSKNIQTKKVLENAPRLSNFLSEKSHSRYLELKRQLEVLNIPYVENFNLVRGLDYYTHTAFEITSGALGSQATVCGGGRYDDLIKQMGGPNTPAIGFAIGLERLILLAGKELEIPRNTDIYIINKGLIAESFAMDLSRKLRNYDLLVELDLSGASFSKQFKKANKLKSKSIIVIGDDEAVNGEFIIRLFGQSGNGNKEEVISFENDIKLENWINNNLLLK.

The protein belongs to the class-II aminoacyl-tRNA synthetase family. In terms of assembly, homodimer.

It localises to the cytoplasm. It catalyses the reaction tRNA(His) + L-histidine + ATP = L-histidyl-tRNA(His) + AMP + diphosphate + H(+). The chain is Histidine--tRNA ligase from Prochlorococcus marinus (strain MIT 9301).